Reading from the N-terminus, the 295-residue chain is UDP-N-acetylenolpyruvoylglucosamine reductase (295 aa).

Residues 25–189 (RVGGPADLFA…LEALFRLDQR (165 aa)) enclose the FAD-binding PCMH-type domain. Arginine 169 is an active-site residue. The active-site Proton donor is serine 218. Glutamate 288 is a catalytic residue.

Belongs to the MurB family. FAD serves as cofactor.

The protein resides in the cytoplasm. It carries out the reaction UDP-N-acetyl-alpha-D-muramate + NADP(+) = UDP-N-acetyl-3-O-(1-carboxyvinyl)-alpha-D-glucosamine + NADPH + H(+). It participates in cell wall biogenesis; peptidoglycan biosynthesis. Its function is as follows. Cell wall formation. The polypeptide is UDP-N-acetylenolpyruvoylglucosamine reductase (Pelobacter propionicus (strain DSM 2379 / NBRC 103807 / OttBd1)).